Reading from the N-terminus, the 525-residue chain is Pre-mRNA-processing factor 19 homolog 2 (525 aa).

The U-box domain maps to methionine 1–proline 70. WD repeat units lie at residues threonine 220–threonine 261, glycine 262–cysteine 301, aspartate 307–glutamine 346, serine 351–lysine 390, glycine 393–serine 431, leucine 433–asparagine 469, and serine 478–valine 517. The DWD box motif lies at phenylalanine 409–arginine 424.

The protein belongs to the WD repeat PRP19 family. In terms of assembly, homotetramer. Component of the multiprotein assembly MOS4-associated complex (MAC) at least composed of MOS4, CDC5, PRL1 and PRP19 which is related to the PRP19C/Prp19 complex/NTC/Nineteen complex identified in other organisms. Associated with the spliceosome.

Its subcellular location is the nucleus. The enzyme catalyses S-ubiquitinyl-[E2 ubiquitin-conjugating enzyme]-L-cysteine + [acceptor protein]-L-lysine = [E2 ubiquitin-conjugating enzyme]-L-cysteine + N(6)-ubiquitinyl-[acceptor protein]-L-lysine.. Its pathway is protein modification; protein ubiquitination. Probable ubiquitin-protein ligase which is mainly involved pre-mRNA splicing and DNA repair. Component of the MAC complex that probably regulates defense responses through transcriptional control and thereby is essential for plant innate immunity. The protein is Pre-mRNA-processing factor 19 homolog 2 (PRP19B) of Arabidopsis thaliana (Mouse-ear cress).